A 411-amino-acid polypeptide reads, in one-letter code: F-box protein At4g19940 (411 aa).

An F-box domain is found at 29 to 75 (RQPIPEIPFDLVIEILTRLPAKSLMRFKSVSKLWSSLICSRNFTNRL).

The protein is F-box protein At4g19940 of Arabidopsis thaliana (Mouse-ear cress).